Here is a 491-residue protein sequence, read N- to C-terminus: Aspartyl/glutamyl-tRNA(Asn/Gln) amidotransferase subunit B (491 aa).

Belongs to the GatB/GatE family. GatB subfamily. As to quaternary structure, heterotrimer of A, B and C subunits.

The enzyme catalyses L-glutamyl-tRNA(Gln) + L-glutamine + ATP + H2O = L-glutaminyl-tRNA(Gln) + L-glutamate + ADP + phosphate + H(+). The catalysed reaction is L-aspartyl-tRNA(Asn) + L-glutamine + ATP + H2O = L-asparaginyl-tRNA(Asn) + L-glutamate + ADP + phosphate + 2 H(+). Its function is as follows. Allows the formation of correctly charged Asn-tRNA(Asn) or Gln-tRNA(Gln) through the transamidation of misacylated Asp-tRNA(Asn) or Glu-tRNA(Gln) in organisms which lack either or both of asparaginyl-tRNA or glutaminyl-tRNA synthetases. The reaction takes place in the presence of glutamine and ATP through an activated phospho-Asp-tRNA(Asn) or phospho-Glu-tRNA(Gln). The sequence is that of Aspartyl/glutamyl-tRNA(Asn/Gln) amidotransferase subunit B from Paraburkholderia phymatum (strain DSM 17167 / CIP 108236 / LMG 21445 / STM815) (Burkholderia phymatum).